Consider the following 386-residue polypeptide: Copper-containing nitrite reductase (386 aa).

Residues 1 to 18 form the signal peptide; the sequence is MKRQALAAIIASMFALAA. Cysteine 19 is lipidated: N-palmitoyl cysteine. Cysteine 19 is lipidated: S-diacylglycerol cysteine. Plastocyanin-like domains lie at 97–191 and 241–342; these read WTFD…ILVE and GHVG…LKVE. The Cu cation site is built by histidine 130, histidine 135, histidine 170, cysteine 171, histidine 179, and methionine 184. Substrate is bound at residue histidine 135. Substrate is bound at residue histidine 276. Histidine 325 serves as a coordination point for Cu cation. The tract at residues 363-386 is disordered; the sequence is GAAPAASAPAASAPAASAPAKSDY. The span at 364–386 shows a compositional bias: low complexity; the sequence is AAPAASAPAASAPAASAPAKSDY. 3 consecutive repeat copies span residues 367–371, 372–376, and 377–381. The 3 X 5 AA tandem repeats of A-A-S-A-P stretch occupies residues 367-381; sequence AASAPAASAPAASAP.

Belongs to the multicopper oxidase family. In terms of assembly, homotrimer. Cu(+) is required as a cofactor. Cu(2+) serves as cofactor.

It localises to the cell outer membrane. The enzyme catalyses nitric oxide + Fe(III)-[cytochrome c] + H2O = Fe(II)-[cytochrome c] + nitrite + 2 H(+). Its function is as follows. Catalyzes the reduction of nitrite to nitric oxide (NO). It could be essential for growth and survival in oxygen-depleted environments. The polypeptide is Copper-containing nitrite reductase (aniA) (Neisseria meningitidis serogroup A / serotype 4A (strain DSM 15465 / Z2491)).